Consider the following 617-residue polypeptide: Proline--tRNA ligase (617 aa).

This sequence belongs to the class-II aminoacyl-tRNA synthetase family. ProS type 1 subfamily. Homodimer.

It is found in the cytoplasm. The catalysed reaction is tRNA(Pro) + L-proline + ATP = L-prolyl-tRNA(Pro) + AMP + diphosphate. Its function is as follows. Catalyzes the attachment of proline to tRNA(Pro) in a two-step reaction: proline is first activated by ATP to form Pro-AMP and then transferred to the acceptor end of tRNA(Pro). As ProRS can inadvertently accommodate and process non-cognate amino acids such as alanine and cysteine, to avoid such errors it has two additional distinct editing activities against alanine. One activity is designated as 'pretransfer' editing and involves the tRNA(Pro)-independent hydrolysis of activated Ala-AMP. The other activity is designated 'posttransfer' editing and involves deacylation of mischarged Ala-tRNA(Pro). The misacylated Cys-tRNA(Pro) is not edited by ProRS. This Streptococcus pneumoniae (strain Hungary19A-6) protein is Proline--tRNA ligase.